Reading from the N-terminus, the 1032-residue chain is Exo-beta-D-glucosaminidase (1032 aa).

The first 32 residues, 1–32 (MSFRQKRTRIPLLAMTVTALAAAVCGVTTAPA), serve as a signal peptide directing secretion. The propeptide occupies 33–46 (ATGAEVAVPLSVGA). Catalysis depends on aspartate 469, which acts as the Proton donor. Glutamate 541 serves as the catalytic Nucleophile. A disordered region spans residues 883 to 908 (SVRISGWNTGTQTVPADGSGPGPSDP). A CBM6 domain is found at 909-1032 (VDYQAEDATI…GGPNVDKITL (124 aa)).

It belongs to the glycosyl hydrolase 2 family. As to quaternary structure, monomer.

The protein localises to the secreted. It catalyses the reaction Hydrolysis of chitosan or chitosan oligosaccharides to remove successive D-glucosamine residues from the non-reducing termini.. Functionally, hydrolyzes chitosan and chitooligosaccharides with retention of anomeric configuration. Has maximum activity on chitotetraose, chitopentaose and their corresponding alcohols, with a slight decrease in the rate of hydrolysis on longer chains. Has no activity against beta-D-glucopyranoside, beta-D-xylopyranoside, beta-D-mannoside, beta-D-glucuronide, beta-D-galactoside, beta-D-N-acetylgalactosamide, beta-D-N-acetylglucosaminide and alpha-D-N-acetylglucosaminide. The sequence is that of Exo-beta-D-glucosaminidase from Amycolatopsis orientalis (Nocardia orientalis).